The chain runs to 456 residues: Bifunctional protein GlmU (456 aa).

Residues 1 to 228 are pyrophosphorylase; that stretch reads MPQNTLNTVI…SHLAAGVNNK (228 aa). UDP-N-acetyl-alpha-D-glucosamine contacts are provided by residues 11–14, lysine 25, glutamine 75, 80–81, 102–104, glycine 138, glutamate 153, asparagine 168, and asparagine 226; these read LAAG, GT, and YGD. Aspartate 104 is a Mg(2+) binding site. A Mg(2+)-binding site is contributed by asparagine 226. The segment at 229–249 is linker; it reads RQLAELERIFQTEQAQELLKA. The tract at residues 250–456 is N-acetyltransferase; that stretch reads GVTLRDPARF…GWVRPEKNKQ (207 aa). 2 residues coordinate UDP-N-acetyl-alpha-D-glucosamine: arginine 332 and lysine 350. Histidine 362 acts as the Proton acceptor in catalysis. 2 residues coordinate UDP-N-acetyl-alpha-D-glucosamine: tyrosine 365 and asparagine 376. Acetyl-CoA is bound by residues alanine 379, 385 to 386, serine 404, alanine 422, and arginine 439; that span reads NY.

The protein in the N-terminal section; belongs to the N-acetylglucosamine-1-phosphate uridyltransferase family. This sequence in the C-terminal section; belongs to the transferase hexapeptide repeat family. Homotrimer. Mg(2+) serves as cofactor.

It localises to the cytoplasm. It catalyses the reaction alpha-D-glucosamine 1-phosphate + acetyl-CoA = N-acetyl-alpha-D-glucosamine 1-phosphate + CoA + H(+). The enzyme catalyses N-acetyl-alpha-D-glucosamine 1-phosphate + UTP + H(+) = UDP-N-acetyl-alpha-D-glucosamine + diphosphate. It participates in nucleotide-sugar biosynthesis; UDP-N-acetyl-alpha-D-glucosamine biosynthesis; N-acetyl-alpha-D-glucosamine 1-phosphate from alpha-D-glucosamine 6-phosphate (route II): step 2/2. It functions in the pathway nucleotide-sugar biosynthesis; UDP-N-acetyl-alpha-D-glucosamine biosynthesis; UDP-N-acetyl-alpha-D-glucosamine from N-acetyl-alpha-D-glucosamine 1-phosphate: step 1/1. The protein operates within bacterial outer membrane biogenesis; LPS lipid A biosynthesis. Its function is as follows. Catalyzes the last two sequential reactions in the de novo biosynthetic pathway for UDP-N-acetylglucosamine (UDP-GlcNAc). The C-terminal domain catalyzes the transfer of acetyl group from acetyl coenzyme A to glucosamine-1-phosphate (GlcN-1-P) to produce N-acetylglucosamine-1-phosphate (GlcNAc-1-P), which is converted into UDP-GlcNAc by the transfer of uridine 5-monophosphate (from uridine 5-triphosphate), a reaction catalyzed by the N-terminal domain. This chain is Bifunctional protein GlmU, found in Neisseria gonorrhoeae.